A 396-amino-acid chain; its full sequence is Gap junction gamma-1 protein (396 aa).

The Cytoplasmic portion of the chain corresponds to Met-1–Lys-22. A helical membrane pass occupies residues Ile-23–Tyr-45. At Asp-46–Arg-75 the chain is on the extracellular side. Residues Phe-76 to Ala-95 traverse the membrane as a helical segment. Residues Ile-96–Lys-175 lie on the Cytoplasmic side of the membrane. The disordered stretch occupies residues Leu-146–Arg-165. Over residues Glu-147–Asn-156 the composition is skewed to basic and acidic residues. A helical transmembrane segment spans residues Ile-176–Leu-198. Residues Tyr-199–Lys-228 lie on the Extracellular side of the membrane. Residues Thr-229 to Trp-248 form a helical membrane-spanning segment. Residues Glu-249–Ile-396 are Cytoplasmic-facing. Positions Tyr-356–Ile-396 are disordered. Low complexity predominate over residues Gly-373 to Ile-396.

It belongs to the connexin family. Gamma-type subfamily. As to quaternary structure, a connexon is composed of a hexamer of connexins. Interacts with CNST.

The protein localises to the cell membrane. It localises to the cell junction. It is found in the gap junction. Its function is as follows. One gap junction consists of a cluster of closely packed pairs of transmembrane channels, the connexons, through which materials of low MW diffuse from one cell to a neighboring cell. This is Gap junction gamma-1 protein (GJC1) from Bos taurus (Bovine).